Consider the following 151-residue polypeptide: Phosphopantetheine adenylyltransferase (151 aa).

T9 serves as a coordination point for substrate. Residues T9–F10 and H17 each bind ATP. Substrate-binding residues include K41, T73, and R87. Residues G88 to R90, E98, and L122 to T128 contribute to the ATP site.

It belongs to the bacterial CoaD family. Homohexamer. The cofactor is Mg(2+).

It is found in the cytoplasm. It carries out the reaction (R)-4'-phosphopantetheine + ATP + H(+) = 3'-dephospho-CoA + diphosphate. It participates in cofactor biosynthesis; coenzyme A biosynthesis; CoA from (R)-pantothenate: step 4/5. In terms of biological role, reversibly transfers an adenylyl group from ATP to 4'-phosphopantetheine, yielding dephospho-CoA (dPCoA) and pyrophosphate. The sequence is that of Phosphopantetheine adenylyltransferase from Bacteroides thetaiotaomicron (strain ATCC 29148 / DSM 2079 / JCM 5827 / CCUG 10774 / NCTC 10582 / VPI-5482 / E50).